We begin with the raw amino-acid sequence, 298 residues long: uncharacterized protein (298 aa).

Helical transmembrane passes span I5–F25, M36–F56, V76–A96, T97–L117, S124–V144, V147–I167, V181–I201, I216–A236, I244–G264, and S272–L292. In terms of domain architecture, EamA 1 spans L17 to D141. The EamA 2 domain maps to L183–L288.

The protein belongs to the EamA transporter family.

The protein resides in the cell membrane. This is an uncharacterized protein from Helicobacter pylori (strain J99 / ATCC 700824) (Campylobacter pylori J99).